Reading from the N-terminus, the 702-residue chain is MASGPGAATLKKCLEVLRDARNDSEQLAALLLVTKAVRAGDLDSKTRRQIFDAIGFTFPNRLLSSRQAPPGCPEHTFRALGLTLLACFCTEPELAGHSQVLNKIPTFADVLLSPCQPDCTSMVDDAYQCLAAVLATPRGPREMVTKGAASALCQAYVNGGYGSERALALLLGLLAVSEAKCWQRDAPHLLAVLSKLSEEFVRAEDGSQFELCELLPRFIPLSPPLAEVSQGSECVRQLYKGLASILGSKLSQSQRDPALKLAASLTQACGSEWIPAGSTGSKFLALLVNLACVEVRLTLEEPEPLEVEGKKEVVTACYVLIEMGIQECLKEEESLLDEAQRMQLMRIMEEAFGAVVFYLRQVKEEELQDPFVFASVRILGAWMAEETSSLKQEICELLPFLVRYARKLFKEGGPAENLPQTAGLVSSDSSILGQDALRFLLPGFCHLTAEDRPRDILISEGAPALLCDYFLHQWGVLTSQPGSLTSTEMSLQTLCGIFLNLVVTAPNLIRQEKTFSSLMDTLLKSLPFLLPQKDHLVLAANIATLGLVMARILSSSAVLQKTGSAKEFFRATICFLSQAHTAQADPGSHGLALAVSPAYVSAWDDIRELWFLGMQALASCVPLFPWLPQAVLQAQWLEELSELLTRVTAASVDFELIAAFQGVLVGLARASKPCREVILSHHGEEWANLYGMAALEQCLSKQ.

The protein belongs to the neurochondrin family.

The protein localises to the cytoplasm. It localises to the cytosol. The protein resides in the cell projection. It is found in the dendrite. Its subcellular location is the postsynapse. Its function is as follows. Probably involved in signal transduction, in the nervous system. Required for the spatial learning process. May also be involved in neurite outgrowth. This chain is Neurochondrin (NCDN), found in Gallus gallus (Chicken).